Reading from the N-terminus, the 159-residue chain is Phosphopantetheine adenylyltransferase (159 aa).

Substrate is bound at residue Thr10. Residues 10 to 11 (TF) and His18 contribute to the ATP site. Residues Lys42, Met74, and Arg88 each contribute to the substrate site. Residues 89–91 (GLR), Glu99, and 124–130 (WSFISSS) contribute to the ATP site.

The protein belongs to the bacterial CoaD family. In terms of assembly, homohexamer. It depends on Mg(2+) as a cofactor.

It localises to the cytoplasm. It carries out the reaction (R)-4'-phosphopantetheine + ATP + H(+) = 3'-dephospho-CoA + diphosphate. The protein operates within cofactor biosynthesis; coenzyme A biosynthesis; CoA from (R)-pantothenate: step 4/5. Reversibly transfers an adenylyl group from ATP to 4'-phosphopantetheine, yielding dephospho-CoA (dPCoA) and pyrophosphate. The polypeptide is Phosphopantetheine adenylyltransferase (Klebsiella pneumoniae subsp. pneumoniae (strain ATCC 700721 / MGH 78578)).